The following is a 267-amino-acid chain: Undecaprenyl-diphosphatase (267 aa).

8 helical membrane passes run 1–21, 39–59, 83–103, 111–131, 144–164, 189–209, 218–238, and 246–266; these read MSYF…FLPI, QGLA…VIYF, AKLA…GLVM, LRSA…LWWV, AGWK…IPGT, FLMS…KLVT, FLLT…HLFL, and MTPF…YLLM.

This sequence belongs to the UppP family.

The protein resides in the cell inner membrane. It catalyses the reaction di-trans,octa-cis-undecaprenyl diphosphate + H2O = di-trans,octa-cis-undecaprenyl phosphate + phosphate + H(+). In terms of biological role, catalyzes the dephosphorylation of undecaprenyl diphosphate (UPP). Confers resistance to bacitracin. The sequence is that of Undecaprenyl-diphosphatase from Vibrio vulnificus (strain CMCP6).